The following is a 119-amino-acid chain: Ribonuclease P protein component (119 aa).

This sequence belongs to the RnpA family. Consists of a catalytic RNA component (M1 or rnpB) and a protein subunit.

The catalysed reaction is Endonucleolytic cleavage of RNA, removing 5'-extranucleotides from tRNA precursor.. RNaseP catalyzes the removal of the 5'-leader sequence from pre-tRNA to produce the mature 5'-terminus. It can also cleave other RNA substrates such as 4.5S RNA. The protein component plays an auxiliary but essential role in vivo by binding to the 5'-leader sequence and broadening the substrate specificity of the ribozyme. In Corynebacterium diphtheriae (strain ATCC 700971 / NCTC 13129 / Biotype gravis), this protein is Ribonuclease P protein component.